The sequence spans 196 residues: Agamous-like MADS-box protein AGL31 (196 aa).

Positions 1–61 constitute an MADS-box domain; sequence MGRKKVEIKR…GKLYKSASGD (61 aa). The region spanning 80–170 is the K-box domain; it reads ALDLAEKTRN…ASQVGKKTFL (91 aa).

Expressed in most plant tissues, roots, seedlings, leaves, stems, inflorescences, pollen, siliques and flowers.

It localises to the nucleus. Probable transcription factor that prevents vernalization by short periods of cold. Acts as a floral repressor. The sequence is that of Agamous-like MADS-box protein AGL31 (AGL31) from Arabidopsis thaliana (Mouse-ear cress).